Reading from the N-terminus, the 1279-residue chain is ATP-dependent helicase/nuclease subunit A (1279 aa).

Residues 4 to 499 (TKWTDEQRQA…VKLFKNFRSR (496 aa)) enclose the UvrD-like helicase ATP-binding domain. Position 25–32 (25–32 (AGAGAGKT)) interacts with ATP. Positions 526–853 (EEALKVGASY…RIMSIHKSKG (328 aa)) constitute a UvrD-like helicase C-terminal domain.

Belongs to the helicase family. AddA subfamily. Heterodimer of AddA and AddB/RexB. It depends on Mg(2+) as a cofactor.

The catalysed reaction is Couples ATP hydrolysis with the unwinding of duplex DNA by translocating in the 3'-5' direction.. The enzyme catalyses ATP + H2O = ADP + phosphate + H(+). In terms of biological role, the heterodimer acts as both an ATP-dependent DNA helicase and an ATP-dependent, dual-direction single-stranded exonuclease. Recognizes the chi site generating a DNA molecule suitable for the initiation of homologous recombination. The AddA nuclease domain is required for chi fragment generation; this subunit has the helicase and 3' -&gt; 5' nuclease activities. The sequence is that of ATP-dependent helicase/nuclease subunit A from Clostridium botulinum (strain Kyoto / Type A2).